The chain runs to 387 residues: MIKEETVSYFQTFDGVMAESDKEEELDATKAKVEKVREENEKLKLLLSTILNNYNSLQMQVSKVLGQQQGASSMELDHIDRQDENNDYDVDISLRLGRSEQKISKKEENKVDKISTKNVEESKDKRSALGFGFQIQSYEASKLDDLCRQVKLANAENKCVSSRKDVKSVRNENHQDVLEEHEQTGLKKTRVCVKASCEDPSINDGCQWRKYGQKTAKTNPLPRAYYRCSMSSNCPVRKQVQRCGEEETSAFMTTYEGNHDHPLPMEASHMAAGTSAAASLLQSGSSSSSSSTSASLSYFFPFHHFSISTTNSHPTVTLDLTRPNYPNQLPDDYPLSSSSFSLNFSSPDPPPPSSHDHTLNFSGLRTQAPLSTDSLLARYRTRLSGQQ.

The segment at residues 197-264 is a DNA-binding region (WRKY); sequence CEDPSINDGC…YEGNHDHPLP (68 aa). Residues 322–366 form a disordered region; the sequence is RPNYPNQLPDDYPLSSSSFSLNFSSPDPPPPSSHDHTLNFSGLRT. The span at 329–346 shows a compositional bias: low complexity; it reads LPDDYPLSSSSFSLNFSS.

It localises to the nucleus. Transcription factor. Interacts specifically with the W box (5'-(T)TGAC[CT]-3'), a frequently occurring elicitor-responsive cis-acting element. This Arabidopsis thaliana (Mouse-ear cress) protein is Probable WRKY transcription factor 36 (WRKY36).